Here is a 160-residue protein sequence, read N- to C-terminus: Cytochrome b6-f complex subunit 4 (160 aa).

3 helical membrane-spanning segments follow: residues 36–56 (LLYI…GLSV), 95–115 (LLGV…PFIE), and 131–151 (TVFL…ALPI).

Belongs to the cytochrome b family. PetD subfamily. As to quaternary structure, the 4 large subunits of the cytochrome b6-f complex are cytochrome b6, subunit IV (17 kDa polypeptide, petD), cytochrome f and the Rieske protein, while the 4 small subunits are petG, petL, petM and petN. The complex functions as a dimer.

The protein resides in the plastid. It localises to the chloroplast thylakoid membrane. Its function is as follows. Component of the cytochrome b6-f complex, which mediates electron transfer between photosystem II (PSII) and photosystem I (PSI), cyclic electron flow around PSI, and state transitions. The protein is Cytochrome b6-f complex subunit 4 of Chlorella vulgaris (Green alga).